Reading from the N-terminus, the 280-residue chain is Orotidine 5'-phosphate decarboxylase (280 aa).

Substrate-binding positions include aspartate 40, 62 to 64 (KTH), 93 to 102 (DRKFVDIGNT), tyrosine 228, and arginine 246. The Proton donor role is filled by lysine 95.

This sequence belongs to the OMP decarboxylase family.

The catalysed reaction is orotidine 5'-phosphate + H(+) = UMP + CO2. It participates in pyrimidine metabolism; UMP biosynthesis via de novo pathway; UMP from orotate: step 2/2. This chain is Orotidine 5'-phosphate decarboxylase (PYRG), found in Solorina crocea.